The chain runs to 448 residues: MPRCPAGAMDEGPVDLRTRPKGTPGAALPLRKRPLRPASPEPATTRSPAGPLDALRSGCDVPVVPGPPHCVARPEALYYQGPLMPIYSTPTMAPHFPLLNLPTHPYSMICPMEHPLSADIAMATRVDEDGDTPLHIAVVQNNIAAVYRILSLFKLGSREVDVHNNLRQTPLHLAVITTLPDMVRLLVTAGASPMALDRHGQTAIHLACEHRSPSCLQALLDSATSGSVDLEVRNYEGLTALHVAVNTGCQEAVLLLLERGADIDAVDIKSGRSPLIHAVENNSLNMVQLLLLHGANVNAQMYSGSSALHSASGRGLLPLVRTLVRSGADSGLKNCHNDTPLMVARSRRVIDILRGKASRAASGSQPEPSPDQSATNSPESSSRLSSNGLQSSPSSSPSLSPPKDAPGFPATPQNFFLPTTSTPAFLPFPGVLRGPGRPVPPSPAPGSS.

Positions 1–54 are disordered; the sequence is MPRCPAGAMDEGPVDLRTRPKGTPGAALPLRKRPLRPASPEPATTRSPAGPLDA. At Ser-39 the chain carries Phosphoserine. 7 ANK repeats span residues 129 to 161, 166 to 195, 199 to 228, 236 to 265, 270 to 299, 303 to 332, and 333 to 362; these read DGDT…REVD, LRQT…SPMA, HGQT…SGSV, EGLT…DIDA, SGRS…NVNA, SGSS…DSGL, and KNCH…RAAS. Residues 356–448 are disordered; it reads KASRAASGSQ…VPPSPAPGSS (93 aa). A compositionally biased stretch (polar residues) spans 361–376; it reads ASGSQPEPSPDQSATN. A Phosphoserine modification is found at Ser-369. A compositionally biased stretch (low complexity) spans 377–398; it reads SPESSSRLSSNGLQSSPSSSPS. 2 positions are modified to phosphoserine; by GSK3: Ser-396 and Ser-400. Residues 411–423 are compositionally biased toward polar residues; that stretch reads TPQNFFLPTTSTP. Residues 425–436 are compositionally biased toward low complexity; that stretch reads FLPFPGVLRGPG. A compositionally biased stretch (pro residues) spans 437 to 448; the sequence is RPVPPSPAPGSS.

Component of a complex consisting of the NF-kappa-B p52-p52 homodimer and BCL3. Component of a complex consisting of the NF-kappa-B p50-p50 homodimer and BCL3. Interacts with N4BP2, COPS5 and PIR. Interacts with CYLD. Polyubiquitinated. Ubiquitination via 'Lys-63'-linked ubiquitin chains is required for nuclear accumulation. Deubiquitinated by CYLD, which acts on 'Lys-63'-linked ubiquitin chains. Deubiquitination by CYLD prevents nuclear accumulation. Post-translationally, activated by phosphorylation.

The protein resides in the nucleus. It is found in the cytoplasm. Its subcellular location is the perinuclear region. Functionally, contributes to the regulation of transcriptional activation of NF-kappa-B target genes. In the cytoplasm, inhibits the nuclear translocation of the NF-kappa-B p50 subunit. In the nucleus, acts as a transcriptional activator that promotes transcription of NF-kappa-B target genes. Contributes to the regulation of cell proliferation. The polypeptide is B-cell lymphoma 3 protein homolog (Bcl3) (Mus musculus (Mouse)).